A 333-amino-acid polypeptide reads, in one-letter code: MQLLKDKFGRVHDYIRISVTDRCNLRCVYCMPEEGLTFLPHEKVLSKDEIVSFMELMVQFGIKKVRITGGEPLLRTDIVEIVRGLGAIPEIEDISITTNAMYLAKKAEALKEAGLTRVNISLDSLHADRFQAITRGGRLQKVLDGIQKAEEVGLFPIKLNVVLIKGQNDDEITDFLKFTKDKDINIRFIEYMPIGHAGTSWKEKYLPLDTIFEACDAIGFEYEAVDSIRGNGPSENFRIKGAKGTFGVIHPVSSHFCDSCNRLRLTADGYIKACLYWDEEMNIRPFIHEPVKLMQLVQKAIDNKPENHEMALKLQDEVQSNKPTWRRMSQIGG.

The region spanning 7–221 (KFGRVHDYIR…FEACDAIGFE (215 aa)) is the Radical SAM core domain. Residue Arg-16 coordinates GTP. [4Fe-4S] cluster-binding residues include Cys-23 and Cys-27. Tyr-29 is a binding site for S-adenosyl-L-methionine. [4Fe-4S] cluster is bound at residue Cys-30. Arg-66 is a binding site for GTP. S-adenosyl-L-methionine is bound at residue Gly-70. A GTP-binding site is contributed by Thr-97. Ser-121 is an S-adenosyl-L-methionine binding site. Lys-158 contacts GTP. Met-192 is a binding site for S-adenosyl-L-methionine. [4Fe-4S] cluster-binding residues include Cys-257 and Cys-260. 262 to 264 (RLR) is a GTP binding site. Position 274 (Cys-274) interacts with [4Fe-4S] cluster.

The protein belongs to the radical SAM superfamily. MoaA family. In terms of assembly, monomer and homodimer. [4Fe-4S] cluster is required as a cofactor.

It catalyses the reaction GTP + AH2 + S-adenosyl-L-methionine = (8S)-3',8-cyclo-7,8-dihydroguanosine 5'-triphosphate + 5'-deoxyadenosine + L-methionine + A + H(+). It participates in cofactor biosynthesis; molybdopterin biosynthesis. In terms of biological role, catalyzes the cyclization of GTP to (8S)-3',8-cyclo-7,8-dihydroguanosine 5'-triphosphate. This Listeria welshimeri serovar 6b (strain ATCC 35897 / DSM 20650 / CCUG 15529 / CIP 8149 / NCTC 11857 / SLCC 5334 / V8) protein is GTP 3',8-cyclase.